Reading from the N-terminus, the 403-residue chain is Tyrosine--tRNA ligase (403 aa).

A 'HIGH' region motif is present at residues 45 to 54; sequence PTAPDLHLGH. The 'KMSKS' region motif lies at 229–233; the sequence is KMSKS. An ATP-binding site is contributed by Lys232. Residues 341 to 402 enclose the S4 RNA-binding domain; sequence VLLGRLLAEA…GKRRFARIVF (62 aa).

Belongs to the class-I aminoacyl-tRNA synthetase family. TyrS type 2 subfamily. In terms of assembly, homodimer.

The protein localises to the cytoplasm. The enzyme catalyses tRNA(Tyr) + L-tyrosine + ATP = L-tyrosyl-tRNA(Tyr) + AMP + diphosphate + H(+). Functionally, catalyzes the attachment of tyrosine to tRNA(Tyr) in a two-step reaction: tyrosine is first activated by ATP to form Tyr-AMP and then transferred to the acceptor end of tRNA(Tyr). In Geobacter metallireducens (strain ATCC 53774 / DSM 7210 / GS-15), this protein is Tyrosine--tRNA ligase.